A 488-amino-acid polypeptide reads, in one-letter code: Alpha-ketoglutaric semialdehyde dehydrogenase (488 aa).

Residues lysine 180 and 233 to 238 each bind NAD(+); that span reads GSNQVG. Catalysis depends on glutamate 255, which acts as the Proton acceptor. Cysteine 289 serves as the catalytic Nucleophile. The NAD(+) site is built by glutamine 336 and glutamate 390.

Belongs to the aldehyde dehydrogenase family. As to quaternary structure, homotetramer.

The enzyme catalyses 2,5-dioxopentanoate + NADP(+) + H2O = 2-oxoglutarate + NADPH + 2 H(+). The catalysed reaction is 2,5-dioxopentanoate + NAD(+) + H2O = 2-oxoglutarate + NADH + 2 H(+). In terms of biological role, catalyzes the NAD(P)(+)-dependent oxidation of alpha-ketoglutaric semialdehyde (alphaKGSA) to alpha-ketoglutarate. Prefers NADP(+) to NAD(+) as a cosubstrate. In vitro, can also use various aldehydes. This is Alpha-ketoglutaric semialdehyde dehydrogenase from Bacillus subtilis (strain 168).